We begin with the raw amino-acid sequence, 400 residues long: Inositol polyphosphate 1-phosphatase (400 aa).

Residue D54 coordinates Li(+). Position 79 (E79) interacts with Mg(2+). E80 provides a ligand contact to Li(+). Mg(2+)-binding residues include D153 and I155. The 1D-myo-inositol 1,4-bisphosphate site is built by D156, S157, and T158. The segment covering 238–257 has biased composition (polar residues); it reads STRSNSEAQSQGTQNPSSEG. Residues 238 to 258 are disordered; that stretch reads STRSNSEAQSQGTQNPSSEGS. Residues S268, K270, G290, A291, K294, and T312 each contribute to the 1D-myo-inositol 1,4-bisphosphate site. D317 provides a ligand contact to Mg(2+). At S318 the chain carries Phosphoserine.

This sequence belongs to the inositol monophosphatase superfamily. In terms of assembly, monomer. Mg(2+) is required as a cofactor.

It catalyses the reaction 1D-myo-inositol 1,4-bisphosphate + H2O = 1D-myo-inositol 4-phosphate + phosphate. It carries out the reaction 1D-myo-inositol 1,3,4-trisphosphate + H2O = 1D-myo-inositol 3,4-bisphosphate + phosphate. It functions in the pathway signal transduction; phosphatidylinositol signaling pathway. Inhibited by Li(+). Its function is as follows. Mg(2+)-dependent phosphatase that catalyzes the hydrolysis of the 1-position phosphate from inositol 1,4-bisphosphate and inositol 1,3,4-trisphosphate and participates in inositol phosphate metabolism. This chain is Inositol polyphosphate 1-phosphatase, found in Bos taurus (Bovine).